The chain runs to 147 residues: Ubiquitin-conjugating enzyme E2 D4 (147 aa).

The region spanning 1–147 is the UBC core domain; it reads MALKRIQKEL…AREWTQKYAM (147 aa). Residue Cys-85 is the Glycyl thioester intermediate of the active site.

Belongs to the ubiquitin-conjugating enzyme family. As to quaternary structure, interacts with map3k10/mlk2. In terms of tissue distribution, at embryonic stages 28 to 35, expressed in the somites, eye primordia, otic vesicle and branchial arches. By stage 35, also weakly expressed in the pronephros.

The enzyme catalyses S-ubiquitinyl-[E1 ubiquitin-activating enzyme]-L-cysteine + [E2 ubiquitin-conjugating enzyme]-L-cysteine = [E1 ubiquitin-activating enzyme]-L-cysteine + S-ubiquitinyl-[E2 ubiquitin-conjugating enzyme]-L-cysteine.. It participates in protein modification; protein ubiquitination. Functionally, catalyzes the covalent attachment of ubiquitin to other proteins. Regulates pronephros development, possibly by promoting ubiquitination and thus inactivation or degradation of map3k10/mlk2. This chain is Ubiquitin-conjugating enzyme E2 D4 (ube2d4), found in Xenopus laevis (African clawed frog).